Consider the following 309-residue polypeptide: GTPase Era (309 aa).

An Era-type G domain is found at 16-186 (HAGFVAIVGK…REQILDALPE (171 aa)). Positions 24 to 31 (GKPNVGKS) are G1. 24 to 31 (GKPNVGKS) is a GTP binding site. The interval 50–54 (QTTRR) is G2. The G3 stretch occupies residues 71–74 (DTPG). GTP-binding positions include 71–75 (DTPGL) and 133–136 (NKVD). A G4 region spans residues 133–136 (NKVD). The segment at 164-166 (LSA) is G5. A KH type-2 domain is found at 217–294 (LREELPYAVA…FLGLEVIVIP (78 aa)).

Belongs to the TRAFAC class TrmE-Era-EngA-EngB-Septin-like GTPase superfamily. Era GTPase family. In terms of assembly, monomer.

The protein resides in the cytoplasm. The protein localises to the cell membrane. Its function is as follows. An essential GTPase that binds both GDP and GTP, with rapid nucleotide exchange. Plays a role in 16S rRNA processing and 30S ribosomal subunit biogenesis and possibly also in cell cycle regulation and energy metabolism. This chain is GTPase Era, found in Deinococcus geothermalis (strain DSM 11300 / CIP 105573 / AG-3a).